The sequence spans 528 residues: 3-ketoacyl-CoA synthase 2 (528 aa).

2 helical membrane passes run 36–56 (LGYH…VGLL) and 78–98 (FHFL…TLYF). The region spanning 97-388 (YFTTRPRRIF…FFATLVARKV (292 aa)) is the FAE domain. Active-site residues include C241, H320, H407, H411, and N444.

The protein belongs to the thiolase-like superfamily. Chalcone/stilbene synthases family. In terms of tissue distribution, expressed in siliques, flowers and stems. In young seedlings, expressed in the central cylinder of primary roots, in emerging lateral roots and in their root cap, but not in aboveground tissues such as hypocotyls, cotyledons and leaves. Expressed in sepals in mature flowers and in the chalaza and micropyle region of developing seeds shortly prior to or just after the detachment from the funiculus. Expressed in roots, flowers, cauline leaves and siliques.

The protein localises to the membrane. The catalysed reaction is a very-long-chain acyl-CoA + malonyl-CoA + H(+) = a very-long-chain 3-oxoacyl-CoA + CO2 + CoA. Its pathway is lipid metabolism; fatty acid biosynthesis. With respect to regulation, inhibited by K3 herbicides such as allidochlor, anilofos, cafenstrole and flufenacet. Strongly inhibited by metazachlor. Mediates the synthesis of VLCFAs from 22 to 26 carbons in length (e.g. C22, C24, C26). Involved in the elongation of C20 fatty acid suberin precursors. Functionally redundant with KCS20 in the two-carbon elongation of C22 fatty acids that is required for cuticular wax and root suberin biosynthesis. The chain is 3-ketoacyl-CoA synthase 2 from Arabidopsis thaliana (Mouse-ear cress).